The chain runs to 160 residues: Outer membrane protein MT2024.1 (160 aa).

The first 22 residues, 1-22, serve as a signal peptide directing secretion; it reads MSWSRVIAYGLLPGLALALTCG.

It is found in the cell outer membrane. The chain is Outer membrane protein MT2024.1 from Mycobacterium tuberculosis (strain CDC 1551 / Oshkosh).